The chain runs to 307 residues: 2-phospho-L-lactate transferase (307 aa).

2 residues coordinate 7,8-didemethyl-8-hydroxy-5-deazariboflavin: D48 and K87.

This sequence belongs to the CofD family. Homodimer. Mg(2+) serves as cofactor.

It carries out the reaction (2S)-lactyl-2-diphospho-5'-guanosine + 7,8-didemethyl-8-hydroxy-5-deazariboflavin = oxidized coenzyme F420-0 + GMP + H(+). It participates in cofactor biosynthesis; coenzyme F420 biosynthesis. Its function is as follows. Catalyzes the transfer of the 2-phospholactate moiety from (2S)-lactyl-2-diphospho-5'-guanosine to 7,8-didemethyl-8-hydroxy-5-deazariboflavin (FO) with the formation of oxidized coenzyme F420-0 and GMP. This is 2-phospho-L-lactate transferase from Methanosarcina acetivorans (strain ATCC 35395 / DSM 2834 / JCM 12185 / C2A).